The chain runs to 135 residues: Putative hydrolase EbsB (135 aa).

An RNase H type-1 domain is found at 1-128; sequence MLRIYVDAAT…ADMLARQALQ (128 aa). Residues aspartate 7, glutamate 45, aspartate 71, and aspartate 120 each contribute to the Mg(2+) site.

It belongs to the RNase H family. EbsB subfamily. Mg(2+) is required as a cofactor.

The protein localises to the secreted. It is found in the cell wall. Seems to play some role in the cell surface expression of a chromosomally encoded receptor, named enterococcal binding substance (EBS), that mediates mating aggregate formation. Might interfere with the synthesis or assembly of EBS and function as a cell wall hydrolase. The polypeptide is Putative hydrolase EbsB (Enterococcus faecalis (strain ATCC 700802 / V583)).